A 222-amino-acid chain; its full sequence is Flagellar L-ring protein (222 aa).

An N-terminal signal peptide occupies residues 1–18 (MRRPGAAALAAAALALAG). Residue Cys-19 is the site of N-palmitoyl cysteine attachment. The S-diacylglycerol cysteine moiety is linked to residue Cys-19.

It belongs to the FlgH family. In terms of assembly, the basal body constitutes a major portion of the flagellar organelle and consists of four rings (L,P,S, and M) mounted on a central rod.

It is found in the cell outer membrane. The protein resides in the bacterial flagellum basal body. Its function is as follows. Assembles around the rod to form the L-ring and probably protects the motor/basal body from shearing forces during rotation. This chain is Flagellar L-ring protein, found in Burkholderia mallei (strain ATCC 23344).